The primary structure comprises 197 residues: Baseplate puncturing device gp45 (197 aa).

The segment at 172 to 197 (DAIINGKSTDKHIHRGDSGGTTGPMQ) is disordered. Residues 179 to 188 (STDKHIHRGD) show a composition bias toward basic and acidic residues. H183 and H185 together coordinate Fe cation. D188 and S189 together coordinate Ca(2+). Residue D188 coordinates chloride.

As to quaternary structure, homotrimer. Part of a complex composed of three DNA circularization protein N, three baseplate hub protein gp44 and three sub-complex wedge (made of two copies of each baseplate protein gp46, gp47 and gp48) that forms the baseplate. Ca(2+) is required as a cofactor. It depends on chloride as a cofactor. The cofactor is Fe cation.

Its subcellular location is the virion. The protein localises to the host cytoplasm. In terms of biological role, component of the baseplate that forms a central needlelike spike used to puncture the host cell membrane for tube insertion during virus entry. Probably involved in baseplate and tail assembly. Serves as the distal plug of tail tube channel and might regulate the process of the phage DNA and protein ejection into the host cell. This chain is Baseplate puncturing device gp45, found in Escherichia phage Mu (Bacteriophage Mu).